The chain runs to 212 residues: Transcription antitermination protein NusB (212 aa).

Belongs to the NusB family.

In terms of biological role, involved in transcription antitermination. Required for transcription of ribosomal RNA (rRNA) genes. Binds specifically to the boxA antiterminator sequence of the ribosomal RNA (rrn) operons. This is Transcription antitermination protein NusB from Gloeothece citriformis (strain PCC 7424) (Cyanothece sp. (strain PCC 7424)).